The following is a 253-amino-acid chain: Peptidase inhibitor R3HDML (253 aa).

A signal peptide spans 1–23; the sequence is MPLLSSIVGLTGLLLWMGHTVGA. Positions 24 to 56 are excised as a propeptide; the sequence is LRMPNTTLVQGRPKNTAVWPLSGLGVPRHRRKR. N-linked (GlcNAc...) asparagine glycosylation is found at asparagine 28 and asparagine 120. Positions 67–207 constitute an SCP domain; that stretch reads LDYHNHIRAS…QQAVYLVCNY (141 aa).

The protein belongs to the CRISP family.

The protein localises to the secreted. Its function is as follows. Putative serine protease inhibitor. The sequence is that of Peptidase inhibitor R3HDML (R3hdml) from Mus musculus (Mouse).